Here is a 675-residue protein sequence, read N- to C-terminus: DNA ligase (675 aa).

Residues 35–39 (DAVYD), 84–85 (SL), and Glu118 each bind NAD(+). The active-site N6-AMP-lysine intermediate is the Lys120. The NAD(+) site is built by Arg141, Glu178, Lys295, and Lys319. Residues Cys413, Cys416, Cys431, and Cys436 each coordinate Zn(2+). The BRCT domain maps to 598 to 675 (GAIGALTGQT…DEAELKALLS (78 aa)).

The protein belongs to the NAD-dependent DNA ligase family. LigA subfamily. It depends on Mg(2+) as a cofactor. Requires Mn(2+) as cofactor.

It carries out the reaction NAD(+) + (deoxyribonucleotide)n-3'-hydroxyl + 5'-phospho-(deoxyribonucleotide)m = (deoxyribonucleotide)n+m + AMP + beta-nicotinamide D-nucleotide.. DNA ligase that catalyzes the formation of phosphodiester linkages between 5'-phosphoryl and 3'-hydroxyl groups in double-stranded DNA using NAD as a coenzyme and as the energy source for the reaction. It is essential for DNA replication and repair of damaged DNA. The protein is DNA ligase of Synechococcus sp. (strain RCC307).